A 415-amino-acid polypeptide reads, in one-letter code: Styrene monooxygenase StyA (415 aa).

This sequence belongs to the StyA family. Homodimer. A direct interaction with the monooxygenase reductase component StyB seems not to be necessary for the enzymatic activity.

The catalysed reaction is styrene + FADH2 + O2 = (S)-styrene oxide + FAD + H2O + H(+). It participates in aromatic compound metabolism. Styrene monooxygenase which catalyzes the first step in the aerobic styrene degradation pathway by enantioselective epoxidation of the vinyl side chain. In a two-component system, a reductase utilizes NADH to reduce FAD, which is then transferred to the oxygenase; the electron transfer is proposed to occur via a diffusing flavin. The chain is Styrene monooxygenase StyA (styA) from Pseudomonas sp.